The chain runs to 457 residues: MALWGGRFTQAADKRFKDFNDSLRFDYRLAEQDIQGSIGWSKALVKVNVLTVEEQHQLEQALNELLVEVRSNPQAILQDDAEDIHSWVESKLIDKVGNLGKKLHTGRSRNDQVAVDIKLWCKQRVVELQESVRNLQRHLVQTAENTQQAVMPGYTHLQRAQPITFAHWCMAYVEMFDRDYSRLTDAYNRMNTCPLGSGALAGTAYAVDRDSLAHDLSFAFATRNSLDSVSDRDHIVELLSIASLSMAHLSRFAEDMIIFNSGEANFVELSDRVTSGSSLMPQKKNPDACELIRGKTGRVIGSLTSMLITLKGLPLAYNKDMQEDKEGIFDALDTWQNCVDMATFVLDELKVNVERTREAALKGYSNATELADYLVSKGVPFRDSHHIVGETVVYAIEKGKGLEDLTIPEFRQFSEVVGDDVYEILSLQSCLDKRCAKGGVSPLRVAEAIAEAKTRFA.

The protein belongs to the lyase 1 family. Argininosuccinate lyase subfamily.

The protein localises to the cytoplasm. The enzyme catalyses 2-(N(omega)-L-arginino)succinate = fumarate + L-arginine. It functions in the pathway amino-acid biosynthesis; L-arginine biosynthesis; L-arginine from L-ornithine and carbamoyl phosphate: step 3/3. In Haemophilus influenzae (strain 86-028NP), this protein is Argininosuccinate lyase.